A 1550-amino-acid chain; its full sequence is Cellulose synthase 1 (1550 aa).

The interval 1-741 is catalytic; sequence MPEVRSSTQS…KERVLKGTVK (741 aa). Helical transmembrane passes span 26 to 46, 47 to 67, and 106 to 126; these read GAGL…TSVT, LPPE…FIVG, and GLLG…LFLS. A catalytic subdomain A region spans residues 147-240; the sequence is EWPTVDIFVP…YILIFDCDHV (94 aa). Asp189 is a catalytic residue. Substrate-binding residues include Asp236 and Asp238. The catalytic subdomain B stretch occupies residues 317 to 377; it reads TAIEQIGGFA…GQRVRWARGM (61 aa). The active site involves Asp333. 5 consecutive transmembrane segments (helical) span residues 398–418, 423–443, 468–488, 507–527, and 547–567; these read LCYL…IFLS, FLFF…AYAI, VYET…LLSP, FDLG…GGLA, and LLNS…IAVG. One can recognise a PilZ domain in the interval 572–647; it reads QKRNSHRIPA…PARIIRAGNG (76 aa). 2 disordered regions span residues 711-734 and 768-813; these read SSPT…RKER and APAH…QPLA. Residues 742–1550 are cyclic di-GMP binding domain; it reads MVSLLALLTF…KQLEDERRKS (809 aa). Low complexity predominate over residues 768–796; it reads APAHQPEASDLPPLPALLPATSGAAQAGA. Residues 1513–1533 form a helical membrane-spanning segment; that stretch reads VLLVGLLGCILIVSVLARALA.

The protein in the N-terminal section; belongs to the glycosyltransferase 2 family. In the C-terminal section; belongs to the AcsB/BcsB family. It depends on Mg(2+) as a cofactor.

The protein resides in the cell inner membrane. It catalyses the reaction [(1-&gt;4)-beta-D-glucosyl](n) + UDP-alpha-D-glucose = [(1-&gt;4)-beta-D-glucosyl](n+1) + UDP + H(+). It participates in glycan metabolism; bacterial cellulose biosynthesis. With respect to regulation, activated by c-di-GMP. Bifunctional protein comprised of a catalytic subunit and a regulatory subunit. The catalytic subunit of cellulose synthase polymerizes uridine 5'-diphosphate glucose to cellulose in a processive way. The thick cellulosic mats generated by this enzyme probably provide a specialized protective environment to the bacterium. The regulatory subunit binds bis-(3'-5') cyclic diguanylic acid (c-di-GMP). This Komagataeibacter xylinus (Gluconacetobacter xylinus) protein is Cellulose synthase 1 (acsAB).